Consider the following 488-residue polypeptide: DELTA-alicitoxin-Pse2b (488 aa).

Residues M1–T21 form the signal peptide. In terms of domain architecture, MACPF spans T24–E344. One can recognise an EGF-like domain in the interval V369–C398. 3 disulfide bridges follow: C370-C383, C377-C391, and C393-C398.

It localises to the secreted. It is found in the nematocyst. Causes lethal toxicity to the shrimp Palaemon paucidence, and hemolytic activity toward sheep red blood cells. The sequence is that of DELTA-alicitoxin-Pse2b from Phyllodiscus semoni (Night anemone).